The chain runs to 164 residues: Peptide methionine sulfoxide reductase MsrA (164 aa).

The active site involves Cys16.

Belongs to the MsrA Met sulfoxide reductase family.

It carries out the reaction L-methionyl-[protein] + [thioredoxin]-disulfide + H2O = L-methionyl-(S)-S-oxide-[protein] + [thioredoxin]-dithiol. The enzyme catalyses [thioredoxin]-disulfide + L-methionine + H2O = L-methionine (S)-S-oxide + [thioredoxin]-dithiol. Has an important function as a repair enzyme for proteins that have been inactivated by oxidation. Catalyzes the reversible oxidation-reduction of methionine sulfoxide in proteins to methionine. The sequence is that of Peptide methionine sulfoxide reductase MsrA from Clostridium tetani (strain Massachusetts / E88).